The sequence spans 92 residues: Small ribosomal subunit protein uS19 (92 aa).

This sequence belongs to the universal ribosomal protein uS19 family.

Protein S19 forms a complex with S13 that binds strongly to the 16S ribosomal RNA. This chain is Small ribosomal subunit protein uS19, found in Thermosynechococcus vestitus (strain NIES-2133 / IAM M-273 / BP-1).